The sequence spans 103 residues: NADH dehydrogenase [ubiquinone] 1 beta subcomplex subunit 7 (103 aa).

The CHCH domain maps to 27-69 (RDMCAHLLIPLNKCRQAEFYLPWKCEDERHVYEKCEYELVMER). 2 consecutive short sequence motifs (cx9C motif) follow at residues 30-40 (CAHLLIPLNKC) and 51-61 (CEDERHVYEKC). Intrachain disulfides connect Cys30–Cys61 and Cys40–Cys51.

It belongs to the complex I NDUFB7 subunit family. Complex I is composed of at least 49 different subunits.

The protein resides in the mitochondrion. Its subcellular location is the mitochondrion inner membrane. The protein localises to the mitochondrion intermembrane space. Functionally, accessory subunit of the mitochondrial membrane respiratory chain NADH dehydrogenase (Complex I), that is believed not to be involved in catalysis. Complex I functions in the transfer of electrons from NADH to the respiratory chain. The immediate electron acceptor for the enzyme is believed to be ubiquinone. The protein is NADH dehydrogenase [ubiquinone] 1 beta subcomplex subunit 7 of Arabidopsis thaliana (Mouse-ear cress).